Consider the following 300-residue polypeptide: PAK4-inhibitor INKA2 (300 aa).

3 disordered regions span residues Gly-59 to Lys-104, Leu-178 to Arg-201, and Lys-230 to Ser-288. Residues Gly-60 to Gln-73 are compositionally biased toward polar residues. The span at Ser-93–Ser-102 shows a compositional bias: low complexity. The inka box stretch occupies residues Glu-140 to Glu-183. Residues Gly-246–Leu-256 show a composition bias toward basic residues.

The protein belongs to the INKA family. As to quaternary structure, interacts with PAK4. As to expression, enriched in the nervous system.

It localises to the nucleus. Its function is as follows. Inhibitor of the serine/threonine-protein kinase PAK4. Acts by binding PAK4 in a substrate-like manner, inhibiting the protein kinase activity. In Mus musculus (Mouse), this protein is PAK4-inhibitor INKA2.